Consider the following 647-residue polypeptide: Pumilio homolog 3 (647 aa).

Over residues 1–10 (MEVKGKKKIT) the composition is skewed to basic residues. Residues 1–123 (MEVKGKKKIT…KKKKELKQNR (123 aa)) form a disordered region. The residue at position 33 (Lys33) is an N6-acetyllysine. Positions 59 to 68 (PGKKRVKQFK) are enriched in basic residues. Over residues 93 to 123 (FQPDGKSDESAAKKPKWDDFKKKKKELKQNR) the composition is skewed to basic and acidic residues. The Nuclear localization signal motif lies at 105 to 117 (KKPKWDDFKKKKK). Residues 142 to 509 (ESLRRKDCDK…VVLDKSVCVL (368 aa)) enclose the PUM-HD domain. Pumilio repeat units follow at residues 176–211 (HDSTRVIQCLIQYGSEEQRKWAFEELQGDLVELSKA), 212–247 (KYSRNIVKKFLMYGSKPQIAEIIRSFKGHVRKMLRH), 248–276 (SEASAIVEYAYNDKAILEQRNMLTEELYG), 288–324 (PTLEKVLEVQPGKLELILDEMKQILTPMAQKEAVIKH), 325–360 (SLVHKVFLDFFTYAPPKLRSELIEAIREAVVYLAHT), 361–396 (HDGARVAMHCLWHGTPKDRKVIVKTMKTYVEKIANG), 397–434 (QYSHLVLLAAFDCIDDTKLVKQIIISEVISSLPSIVND), 435–503 (KYGR…VVLD), 504–550 (KSVC…IAEH), 551–595 (PAGH…WASI), and 596–635 (NRGAIVLSSLLQSCDQDVVNKVKAGLKTLIPTLEKTKSTS).

As to quaternary structure, interacts with PARP1 (via catalytic domain).

The protein resides in the nucleus. Its subcellular location is the nucleolus. It is found in the nucleoplasm. It localises to the chromosome. Its function is as follows. Inhibits the poly(ADP-ribosyl)ation activity of PARP1 and the degradation of PARP1 by CASP3 following genotoxic stress. Binds to double-stranded RNA or DNA without sequence specificity. Involved in development of the eye and of primordial germ cells. The chain is Pumilio homolog 3 from Rattus norvegicus (Rat).